A 115-amino-acid chain; its full sequence is Large ribosomal subunit protein bL19 (115 aa).

The protein belongs to the bacterial ribosomal protein bL19 family.

This protein is located at the 30S-50S ribosomal subunit interface and may play a role in the structure and function of the aminoacyl-tRNA binding site. The sequence is that of Large ribosomal subunit protein bL19 from Desulforudis audaxviator (strain MP104C).